The chain runs to 1011 residues: MKSLLKRLIALAAAYSVAAAPSFSHHSSQDAANKRELLQDLVTWDQHSLFVRGERLMIFSGEFHPFRLPVPGLWFDVFQKIKSLGFNAVSFYTDWGLMEGNPGHVVTDGIWSLDEFFTAAREAGLYLIARPGPYINAETSAGGIPGWVLRRKGIIRSNSEDYLRATDTYMATLGKIIAKAQITNGGPVILVQPENEYTTWPNVSESEFPTTMNQEVMAYAEKQLRDAGVVVPTVVNDNKNLGYFAPGTGLGETDLYGIDAYPMRYDCGNPYVWPTYRFPRDWQHEHRNHSPTTPFAIMEFQGGSGDGWGGVTEDGCAILVNNEAVRVVYKNNYGFGVRVFNIYMTYGGTNWGNLGYYGGYTSYDYGAAITEDRQIWREKYSEEKLQANFLKVSPAYLTSTPGNGVNGSYTGNKDITVTPLFGNGTTTNLYLVRHADFTSTGSAQYNLSISTSVGNVTIPQLGGSLSLNGRDSKFHITDYDVGGFNLIYSSAEVFTWAKGDNKKRVLVLYGGAGELHEFALPKHLPRPTVVEGSYVKIAKQGSAWVVQWEVAAQRRVLRAGKLEIHLLWRNDAYQHWVLELPAKQPIANYSSPSKETVIVKGGYLLRSAWITDNDLHLTGDVNVTTPLEVISAPKRFDGIVFNGQSLKSTRSKIGNLAATVHYQPPAISLPDLKRLDWKYIDSLPEISTEYNDEGWTPLTNTYTNNTREFTGPTCLYADDYGYHGGSLIYRGHFTANGDESWVFLNTSGGVGFANSVWLNQTFLGSWTGSGRNMTYPRNISLPHELSPGEPYVFTVVIDHMGQDEEAPGTDAIKFPRGILDYALSGHELSDLRWKMTGNLGGEQYQDLTRGPLNEGAMYAERQGYHLPSPPTSSWKSSNPIKEGLTGAGIGFYATSFSLDLPEGYDIPLSFRFNNSASAARSGTSYRCQLFVNGYQFGKYVNDLGPQTKFPVPEGILNYNGVNYVAVSLWALESQGALIGGLDLVASTPILSGYRKPAPAPQPGWKPRRGAY.

The signal sequence occupies residues 1 to 19 (MKSLLKRLIALAAAYSVAA). The substrate site is built by Tyr-92, Asn-136, Ala-137, Glu-138, and Asn-195. The active-site Proton donor is the Glu-196. Residue Asn-202 is glycosylated (N-linked (GlcNAc...) asparagine). Tyr-261 contributes to the substrate binding site. Cys-267 and Cys-316 form a disulfide bridge. Catalysis depends on Glu-299, which acts as the Nucleophile. Substrate is bound at residue Tyr-365. Asn-406, Asn-423, Asn-446, Asn-455, Asn-588, Asn-622, Asn-704, Asn-745, Asn-759, Asn-772, Asn-778, and Asn-913 each carry an N-linked (GlcNAc...) asparagine glycan.

Belongs to the glycosyl hydrolase 35 family.

Its subcellular location is the secreted. It catalyses the reaction Hydrolysis of terminal non-reducing beta-D-galactose residues in beta-D-galactosides.. Cleaves beta-linked terminal galactosyl residues from gangliosides, glycoproteins, and glycosaminoglycans. In Aspergillus fumigatus (strain CBS 144.89 / FGSC A1163 / CEA10) (Neosartorya fumigata), this protein is Probable beta-galactosidase E (lacE).